The following is a 63-amino-acid chain: Large ribosomal subunit protein uL29 (63 aa).

It belongs to the universal ribosomal protein uL29 family.

This chain is Large ribosomal subunit protein uL29, found in Shewanella baltica (strain OS223).